Consider the following 179-residue polypeptide: Riboflavin kinase (179 aa).

Position 61 to 66 (Gly-61 to Arg-66) interacts with CDP. 2 residues coordinate Mg(2+): Thr-90 and Asn-92. 2 residues coordinate FMN: Thr-147 and Glu-155. Residue Val-160–Arg-163 coordinates CDP.

The protein belongs to the archaeal riboflavin kinase family. Mg(2+) is required as a cofactor.

It carries out the reaction riboflavin + CTP = CDP + FMN + H(+). The protein operates within cofactor biosynthesis; FMN biosynthesis; FMN from riboflavin (CTP route): step 1/1. Catalyzes the CTP-dependent phosphorylation of riboflavin (vitamin B2) to form flavin mononucleotide (FMN). This chain is Riboflavin kinase, found in Ignicoccus hospitalis (strain KIN4/I / DSM 18386 / JCM 14125).